The chain runs to 168 residues: Ribulose bisphosphate carboxylase small subunit, chloroplastic (168 aa).

The transit peptide at 1–28 (MASIAAKSVSLRAATRRAAPVAAPADAR) directs the protein to the chloroplast.

The protein belongs to the RuBisCO small chain family. As to quaternary structure, heterohexadecamer of 8 large and 8 small subunits.

It is found in the plastid. The protein resides in the chloroplast. Functionally, ruBisCO catalyzes two reactions: the carboxylation of D-ribulose 1,5-bisphosphate, the primary event in carbon dioxide fixation, as well as the oxidative fragmentation of the pentose substrate. Both reactions occur simultaneously and in competition at the same active site. Although the small subunit is not catalytic it is essential for maximal activity. The protein is Ribulose bisphosphate carboxylase small subunit, chloroplastic of Chlamydomonas moewusii (Chlamydomonas eugametos).